Here is a 330-residue protein sequence, read N- to C-terminus: Aspartate--ammonia ligase (330 aa).

This sequence belongs to the class-II aminoacyl-tRNA synthetase family. AsnA subfamily.

The protein localises to the cytoplasm. It catalyses the reaction L-aspartate + NH4(+) + ATP = L-asparagine + AMP + diphosphate + H(+). It participates in amino-acid biosynthesis; L-asparagine biosynthesis; L-asparagine from L-aspartate (ammonia route): step 1/1. This Streptococcus equi subsp. zooepidemicus (strain H70) protein is Aspartate--ammonia ligase.